A 157-amino-acid polypeptide reads, in one-letter code: 2-C-methyl-D-erythritol 2,4-cyclodiphosphate synthase (157 aa).

Asp-8 and His-10 together coordinate a divalent metal cation. 4-CDP-2-C-methyl-D-erythritol 2-phosphate is bound by residues 8–10 (DVH) and 34–35 (HS). His-42 contributes to the a divalent metal cation binding site. Residues 56–58 (DIG), 61–65 (FPDTD), 100–106 (AQAPKMA), 132–135 (TTTE), Phe-139, and Arg-142 each bind 4-CDP-2-C-methyl-D-erythritol 2-phosphate.

The protein belongs to the IspF family. Homotrimer. The cofactor is a divalent metal cation.

It catalyses the reaction 4-CDP-2-C-methyl-D-erythritol 2-phosphate = 2-C-methyl-D-erythritol 2,4-cyclic diphosphate + CMP. It functions in the pathway isoprenoid biosynthesis; isopentenyl diphosphate biosynthesis via DXP pathway; isopentenyl diphosphate from 1-deoxy-D-xylulose 5-phosphate: step 4/6. In terms of biological role, involved in the biosynthesis of isopentenyl diphosphate (IPP) and dimethylallyl diphosphate (DMAPP), two major building blocks of isoprenoid compounds. Catalyzes the conversion of 4-diphosphocytidyl-2-C-methyl-D-erythritol 2-phosphate (CDP-ME2P) to 2-C-methyl-D-erythritol 2,4-cyclodiphosphate (ME-CPP) with a corresponding release of cytidine 5-monophosphate (CMP). The polypeptide is 2-C-methyl-D-erythritol 2,4-cyclodiphosphate synthase (Pseudomonas syringae pv. syringae (strain B728a)).